The chain runs to 431 residues: Adenosylhomocysteinase (431 aa).

Threonine 56, aspartate 131, and glutamate 156 together coordinate substrate. Position 157–159 (157–159 (TTT)) interacts with NAD(+). The substrate site is built by lysine 186 and aspartate 190. Residues asparagine 191, 222–227 (GDVGKG), glutamate 243, 299–301 (IGH), and asparagine 345 contribute to the NAD(+) site.

Belongs to the adenosylhomocysteinase family. Homotetramer. Requires NAD(+) as cofactor.

The catalysed reaction is S-adenosyl-L-homocysteine + H2O = L-homocysteine + adenosine. Its pathway is amino-acid biosynthesis; L-homocysteine biosynthesis; L-homocysteine from S-adenosyl-L-homocysteine: step 1/1. Its function is as follows. Adenosylhomocysteine is a competitive inhibitor of S-adenosyl-L-methionine-dependent methyl transferase reactions; therefore adenosylhomocysteinase may play a key role in the control of methylations via regulation of the intracellular concentration of adenosylhomocysteine. This Dictyostelium discoideum (Social amoeba) protein is Adenosylhomocysteinase (sahA).